Reading from the N-terminus, the 564-residue chain is Arginine--tRNA ligase (564 aa).

The 'HIGH' region motif lies at 124–134 (PNIAKDMHVGH).

Belongs to the class-I aminoacyl-tRNA synthetase family. In terms of assembly, monomer.

Its subcellular location is the cytoplasm. The enzyme catalyses tRNA(Arg) + L-arginine + ATP = L-arginyl-tRNA(Arg) + AMP + diphosphate. This Chlamydia caviae (strain ATCC VR-813 / DSM 19441 / 03DC25 / GPIC) (Chlamydophila caviae) protein is Arginine--tRNA ligase.